The sequence spans 235 residues: C-&gt;U-editing enzyme APOBEC-1 (235 aa).

Residues 10-131 (GDATLRRRIK…MDQQHRQGLK (122 aa)) form the CMP/dCMP-type deaminase domain. Zn(2+) is bound at residue His-60. The active-site Proton donor is the Glu-62. Residues Cys-92 and Cys-95 each contribute to the Zn(2+) site.

Belongs to the cytidine and deoxycytidylate deaminase family. Homodimer. Interacts with A1CF; form an mRNA editing complex. Interacts with RBM47; form an mRNA editing complex. Found in a complex with CELF2/CUGBP2 and A1CF. Interacts with HNRPAB. Interacts with SYNCRIP. Zn(2+) is required as a cofactor.

The protein resides in the cytoplasm. Its subcellular location is the nucleus. The catalysed reaction is a cytidine in mRNA + H2O + H(+) = a uridine in mRNA + NH4(+). It carries out the reaction cytidine(6666) in apoB mRNA + H2O + H(+) = uridine(6666) in apoB mRNA + NH4(+). Its function is as follows. Cytidine deaminase catalyzing the cytidine to uridine postranscriptional editing of a variety of mRNAs. Form complexes with cofactors that confer differential editing activity and selectivity. Responsible for the postranscriptional editing of a CAA codon for Gln to a UAA codon for stop in the apolipoprotein B mRNA. Also involved in CGA (Arg) to UGA (Stop) editing in the NF1 mRNA. May also play a role in the epigenetic regulation of gene expression by participating in DNA demethylation. The chain is C-&gt;U-editing enzyme APOBEC-1 from Monodelphis domestica (Gray short-tailed opossum).